Consider the following 345-residue polypeptide: Holliday junction branch migration complex subunit RuvB (345 aa).

The large ATPase domain (RuvB-L) stretch occupies residues L3–Y187. ATP is bound by residues L26, R27, G68, K71, T72, T73, E134–F136, R177, Y187, and R224. T72 contributes to the Mg(2+) binding site. The tract at residues S188 to E259 is small ATPAse domain (RuvB-S). A head domain (RuvB-H) region spans residues S262 to L345. DNA is bound by residues R317 and R322.

Belongs to the RuvB family. Homohexamer. Forms an RuvA(8)-RuvB(12)-Holliday junction (HJ) complex. HJ DNA is sandwiched between 2 RuvA tetramers; dsDNA enters through RuvA and exits via RuvB. An RuvB hexamer assembles on each DNA strand where it exits the tetramer. Each RuvB hexamer is contacted by two RuvA subunits (via domain III) on 2 adjacent RuvB subunits; this complex drives branch migration. In the full resolvosome a probable DNA-RuvA(4)-RuvB(12)-RuvC(2) complex forms which resolves the HJ.

It is found in the cytoplasm. The enzyme catalyses ATP + H2O = ADP + phosphate + H(+). Its function is as follows. The RuvA-RuvB-RuvC complex processes Holliday junction (HJ) DNA during genetic recombination and DNA repair, while the RuvA-RuvB complex plays an important role in the rescue of blocked DNA replication forks via replication fork reversal (RFR). RuvA specifically binds to HJ cruciform DNA, conferring on it an open structure. The RuvB hexamer acts as an ATP-dependent pump, pulling dsDNA into and through the RuvAB complex. RuvB forms 2 homohexamers on either side of HJ DNA bound by 1 or 2 RuvA tetramers; 4 subunits per hexamer contact DNA at a time. Coordinated motions by a converter formed by DNA-disengaged RuvB subunits stimulates ATP hydrolysis and nucleotide exchange. Immobilization of the converter enables RuvB to convert the ATP-contained energy into a lever motion, pulling 2 nucleotides of DNA out of the RuvA tetramer per ATP hydrolyzed, thus driving DNA branch migration. The RuvB motors rotate together with the DNA substrate, which together with the progressing nucleotide cycle form the mechanistic basis for DNA recombination by continuous HJ branch migration. Branch migration allows RuvC to scan DNA until it finds its consensus sequence, where it cleaves and resolves cruciform DNA. The polypeptide is Holliday junction branch migration complex subunit RuvB (Tropheryma whipplei (strain TW08/27) (Whipple's bacillus)).